The following is a 367-amino-acid chain: Probable 7-methylxanthine methyltransferase 2 (367 aa).

Tyr-20 serves as a coordination point for S-adenosyl-L-homocysteine. Theobromine is bound at residue Thr-27. S-adenosyl-L-homocysteine is bound by residues Cys-64, Gln-69, Asp-101, Leu-102, Ser-134, and Phe-135. Tyr-152, His-155, and Trp-156 together coordinate theobromine. Mg(2+)-binding residues include Asn-172, Asp-258, Phe-260, and Asn-261. A theobromine-binding site is contributed by Phe-313.

Belongs to the methyltransferase superfamily. Type-7 methyltransferase family. It depends on Mg(2+) as a cofactor.

The catalysed reaction is 7-methylxanthine + S-adenosyl-L-methionine = theobromine + S-adenosyl-L-homocysteine + H(+). It participates in alkaloid biosynthesis. In terms of biological role, involved in the biosynthesis of theobromine. The chain is Probable 7-methylxanthine methyltransferase 2 from Theobroma cacao (Cacao).